A 575-amino-acid chain; its full sequence is Flagellin B (575 aa).

It belongs to the bacterial flagellin family. As to quaternary structure, heteromer of flaA and flaB.

The protein localises to the secreted. The protein resides in the bacterial flagellum. Its function is as follows. Flagellin is the subunit protein which polymerizes to form the filaments of bacterial flagella. This Campylobacter jejuni protein is Flagellin B (flaB).